The sequence spans 117 residues: Small ribosomal subunit protein bS18c (117 aa).

Residues 86–117 (SELTPRTNALKARNKNKQNKYQNNQTKFLSNF) are disordered.

This sequence belongs to the bacterial ribosomal protein bS18 family. In terms of assembly, part of the 30S ribosomal subunit.

The protein resides in the plastid. The chain is Small ribosomal subunit protein bS18c from Cuscuta exaltata (Tall dodder).